The following is a 158-amino-acid chain: Endoribonuclease YbeY (158 aa).

Residues histidine 124, histidine 128, and histidine 134 each contribute to the Zn(2+) site.

It belongs to the endoribonuclease YbeY family. Zn(2+) serves as cofactor.

It localises to the cytoplasm. Its function is as follows. Single strand-specific metallo-endoribonuclease involved in late-stage 70S ribosome quality control and in maturation of the 3' terminus of the 16S rRNA. The polypeptide is Endoribonuclease YbeY (Latilactobacillus sakei subsp. sakei (strain 23K) (Lactobacillus sakei subsp. sakei)).